The following is a 216-amino-acid chain: Ras-like protein rasW (216 aa).

16 to 23 is a binding site for GTP; the sequence is GDGGVGKT. The Effector region motif lies at 38 to 46; that stretch reads YDPTIEDSY. GTP is bound by residues 63 to 67 and 122 to 125; these read DTAGQ and NKID. Positions 171-193 are disordered; it reads KRKEDPQSHKPSKDSDSKKPLVN. Basic and acidic residues predominate over residues 172–189; sequence RKEDPQSHKPSKDSDSKK. Cysteine methyl ester is present on cysteine 213. Cysteine 213 carries the S-geranylgeranyl cysteine lipid modification. A propeptide spans 214–216 (removed in mature form); it reads KMM.

This sequence belongs to the small GTPase superfamily. Ras family.

The protein localises to the cell membrane. It carries out the reaction GTP + H2O = GDP + phosphate + H(+). In terms of biological role, ras proteins bind GDP/GTP and possess intrinsic GTPase activity. This Dictyostelium discoideum (Social amoeba) protein is Ras-like protein rasW (rasW).